A 182-amino-acid chain; its full sequence is Mid1-interacting protein 1 (182 aa).

At M1 the chain carries N-acetylmethionine. A disordered region spans residues 55-75 (VGGSGGCLEERTTPAPSPGSA). 3 positions are modified to phosphoserine: S71, S74, and S78.

This sequence belongs to the SPOT14 family. As to quaternary structure, homodimer in the absence of THRSP. Heterodimer with THRSP. The homodimer interacts with ACACA and ACACB. Promotes polymerization of Acetyl-CoA carboxylase to form complexes that contain MID1IP1 and ACACA and/or ACACB. Interaction with THRSP interferes with ACACA binding. As to expression, during embryonic development, expressed mainly in the neuroepithelial midline, urogenital apparatus and digits. Detected in adult white fat, liver, heart, brain and kidney. Expressed at very low levels in lactating mammary gland.

Its subcellular location is the nucleus. The protein resides in the cytoplasm. It is found in the cytoskeleton. Its function is as follows. Plays a role in the regulation of lipogenesis in liver. Up-regulates ACACA enzyme activity. Required for efficient lipid biosynthesis, including triacylglycerol, diacylglycerol and phospholipid. Involved in stabilization of microtubules. This is Mid1-interacting protein 1 (Mid1ip1) from Mus musculus (Mouse).